The following is a 343-amino-acid chain: Methionine import ATP-binding protein MetN 1 (343 aa).

Residues 2-241 enclose the ABC transporter domain; it reads IKLSNITKVF…PKTPLAQKFI (240 aa). Residue 38–45 participates in ATP binding; the sequence is GASGAGKS.

Belongs to the ABC transporter superfamily. Methionine importer (TC 3.A.1.24) family. In terms of assembly, the complex is composed of two ATP-binding proteins (MetN), two transmembrane proteins (MetI) and a solute-binding protein (MetQ).

Its subcellular location is the cell inner membrane. The enzyme catalyses L-methionine(out) + ATP + H2O = L-methionine(in) + ADP + phosphate + H(+). The catalysed reaction is D-methionine(out) + ATP + H2O = D-methionine(in) + ADP + phosphate + H(+). Functionally, part of the ABC transporter complex MetNIQ involved in methionine import. Responsible for energy coupling to the transport system. This chain is Methionine import ATP-binding protein MetN 1, found in Salmonella typhi.